The following is a 327-amino-acid chain: Prenyl transferase janC (327 aa).

The helical transmembrane segment at 3–23 (FPGAGPILGAIAVSSCLYFLF) threads the bilayer. Residues Lys-63 and His-96 each coordinate isopentenyl diphosphate. 2 residues coordinate Mg(2+): Asp-103 and Asp-107. 2 residues coordinate dimethylallyl diphosphate: Arg-112 and Lys-196. Asn-211 carries N-linked (GlcNAc...) asparagine glycosylation.

This sequence belongs to the FPP/GGPP synthase family.

It localises to the membrane. Its pathway is secondary metabolite biosynthesis. Its function is as follows. Prenyl transferase; part of the gene cluster that mediates the biosynthesis of the indole diterpenes janthitremanes such as shearinine K or shearinine A. The geranylgeranyl diphosphate (GGPP) synthase janG catalyzes the first step in janthitremane biosynthesis via conversion of farnesyl pyrophosphate and isopentyl pyrophosphate into geranylgeranyl pyrophosphate (GGPP). Condensation of indole-3-glycerol phosphate with GGPP by the prenyl transferase janC then forms 3-geranylgeranylindole (3-GGI). Epoxidation by the FAD-dependent monooxygenase janM leads to a epoxidized-GGI that is substrate of the terpene cyclase janB for cyclization to yield paspaline. Paspaline is subsequently converted to 13-desoxypaspaline by the cytochrome P450 monooxygenase janP, via beta-PC-M6 in a series of alpha-face oxidations. The cytochrome P450 monooxygenase janQ is proposed to carry out sequential beta-face oxidation steps at C-7 and C-13 of 13-desoxypaspaline to form paspalicine and paspalinine respectively. The indole diterpene prenyltransferase janD may then convert paspalinine into shearinine K which is substrate of janO and/or additional enzymes for oxidation and cyclization to generate shearinine A. This chain is Prenyl transferase janC, found in Penicillium janthinellum (Penicillium vitale).